A 492-amino-acid polypeptide reads, in one-letter code: Tyrosine--tRNA ligase, mitochondrial (492 aa).

Tyr89 is a binding site for L-tyrosine. Asp93 is a binding site for ATP. The 'HIGH' region signature appears at 94–103; the sequence is PTAQSLHLGN. Asp133, Tyr239, Gln243, Asp246, and Gln265 together coordinate L-tyrosine. Positions 303–307 match the 'KMSKS' region motif; it reads KFGKS. An ATP-binding site is contributed by Lys306.

The protein belongs to the class-I aminoacyl-tRNA synthetase family. As to quaternary structure, homodimer.

The protein resides in the mitochondrion matrix. The catalysed reaction is tRNA(Tyr) + L-tyrosine + ATP = L-tyrosyl-tRNA(Tyr) + AMP + diphosphate + H(+). In terms of biological role, catalyzes the attachment of tyrosine to tRNA(Tyr) in a two-step reaction: tyrosine is first activated by ATP to form Tyr-AMP and then transferred to the acceptor end of tRNA(Tyr). The sequence is that of Tyrosine--tRNA ligase, mitochondrial (MSY1) from Saccharomyces cerevisiae (strain ATCC 204508 / S288c) (Baker's yeast).